An 851-amino-acid polypeptide reads, in one-letter code: Periplasmic nitrate reductase (851 aa).

Residues 1 to 29 constitute a signal peptide (tat-type signal); the sequence is MQSNRRDFLKAQALAASAAAAGIPIVVEA. Residues 44–100 enclose the 4Fe-4S Mo/W bis-MGD-type domain; the sequence is VRWDKAPCRFCGTGCAVMVGVQEGKVVATQGDPEAPVNRGLNCIKGYFLSKIMYGRD. Residues Cys51, Cys54, Cys58, and Cys86 each coordinate [4Fe-4S] cluster. Mo-bis(molybdopterin guanine dinucleotide) is bound by residues Lys88, Gln155, Asn180, Cys184, 217 to 224, 248 to 252, and 267 to 269; these read WGSNMAEM, STYEH, and QTD. Residues 317–338 form a disordered region; the sequence is DATSNGYPGADGKPKGNPNDST. Residues Met388, Gln392, Asn498, 524–525, Lys547, Asp574, and 741–750 contribute to the Mo-bis(molybdopterin guanine dinucleotide) site; these read SD and TGRVLEHWHT. Phe817 is a binding site for substrate. The Mo-bis(molybdopterin guanine dinucleotide) site is built by Asn825 and Lys842.

This sequence belongs to the prokaryotic molybdopterin-containing oxidoreductase family. NasA/NapA/NarB subfamily. As to quaternary structure, component of the periplasmic nitrate reductase NapAB complex composed of NapA and NapB. [4Fe-4S] cluster is required as a cofactor. The cofactor is Mo-bis(molybdopterin guanine dinucleotide). Predicted to be exported by the Tat system. The position of the signal peptide cleavage has not been experimentally proven.

The protein localises to the periplasm. It catalyses the reaction 2 Fe(II)-[cytochrome] + nitrate + 2 H(+) = 2 Fe(III)-[cytochrome] + nitrite + H2O. In terms of biological role, catalytic subunit of the periplasmic nitrate reductase complex NapAB. Receives electrons from NapB and catalyzes the reduction of nitrate to nitrite. This chain is Periplasmic nitrate reductase, found in Leptothrix cholodnii (strain ATCC 51168 / LMG 8142 / SP-6) (Leptothrix discophora (strain SP-6)).